The following is a 661-amino-acid chain: CD180 antigen (661 aa).

The first 23 residues, 1–23 (MAFDVSCFFWVVLFSAGCKVITS), serve as a signal peptide directing secretion. Residues 24–626 (WDQMCIEKEA…KLSDVKLSCG (603 aa)) lie on the Extracellular side of the membrane. An LRRNT domain is found at 33–53 (ANKTYNCENLGLSEIPDTLPN). Asparagine 34, asparagine 53, asparagine 70, and asparagine 78 each carry an N-linked (GlcNAc...) asparagine glycan. 7 LRR repeats span residues 54-75 (TTEF…TFSR), 78-99 (NLTF…TFQS), 102-123 (QLST…SLNG), 126-147 (SLKH…PVHN), 150-171 (NLES…KDFP), 174-195 (NLKV…DMRS), and 201-221 (NLSL…AFDS). N-linked (GlcNAc...) asparagine glycosylation is found at asparagine 201, asparagine 234, and asparagine 244. LRR repeat units follow at residues 275–296 (SVES…TFQC), 299–320 (QLQE…MKGL), 322–343 (LLKK…SAAN), 346–366 (SLTH…VGCL), and 371–391 (NLQT…CSLQ). 2 N-linked (GlcNAc...) asparagine glycosylation sites follow: asparagine 394 and asparagine 402. LRR repeat units follow at residues 397–418 (HLQT…AFKE), 421–442 (QLEL…SPFQ), 446–466 (FLQV…HLLA), 470–493 (VLRH…NLLQ), 497–518 (SLEV…AFHS), 521–544 (KMSH…SHLK), and 546–564 (IYLN…RLLP). An N-linked (GlcNAc...) asparagine glycan is attached at asparagine 451. A glycan (N-linked (GlcNAc...) asparagine) is linked at asparagine 573. The 51-residue stretch at 577–627 (NPLDCTCSNIHFLTWYKENLHKLEGSEETTCANPPSLRGVKLSDVKLSCGI) folds into the LRRCT domain. The helical transmembrane segment at 627–650 (ITAIGIFFLIVFLLLLAILLFFAV) threads the bilayer. The Cytoplasmic segment spans residues 651–661 (KYLLRWKYQHI).

Belongs to the Toll-like receptor family. In terms of assembly, M-shaped tetramer of two CD180-LY86 heterodimers. Expressed mainly on mature peripherical B cells. Detected in spleen, lymph node and appendix. Not detected in pre-B and -T cells.

It localises to the cell membrane. In terms of biological role, may cooperate with MD-1 and TLR4 to mediate the innate immune response to bacterial lipopolysaccharide (LPS) in B-cells. Leads to NF-kappa-B activation. Also involved in the life/death decision of B-cells. In Homo sapiens (Human), this protein is CD180 antigen (CD180).